The sequence spans 572 residues: MLRNCLRKLGNHQTKCSVKTLHTPIYRTKNLQVLRDTLSGIKLLEKIITSSSYNKTLIYEPKYKSKPQVVSSHDTMRLHNVMRELLDSLQVDEATNTRLQSNRPRKLGRVGLQLFMDCIQDNLTATSTSLTCSLLEHYFKYPEKEVTNGIKAGLRYIRDFLAKNKIIVKSQNDVDALVEQLTMSSSDSQSIKRVLKAINYELFSDDIVRVINGNKTYDEVDVSKGWKYPAGILDSNEAYLRSLELPTKKLVSIDKDMLVLMYDGTLRDANKILPTITYARKLRKSILLIVNGDCTGDALTSVTINNNRNKRENNESRIVVLKYSKKANNDLAPQENLDFIKFLRLPCGYDSIYSPEYSPLVPSKMCADKYYGSIESIKATTGEAFLYNSIDAEAIPNKVPKSFLQNTVTLSIGGHNEIEIDRRRNAIDNCLNNVLCHGLAKGFIPGYGISLLKAIPGLNELKANEPNFMTKVGINAVLSAVILPSEVAFKNAYGYNYYEINSLIAGAINEKSFPMAKFSPNSEPVNTVKDGNLEPWSKMDSCLAGVETFIELLTSCNTIITCVYKKPERHKA.

A mitochondrion-targeting transit peptide spans 1–16 (MLRNCLRKLGNHQTKC). Over 17–471 (SVKTLHTPIY…KANEPNFMTK (455 aa)) the chain is Mitochondrial matrix. The helical transmembrane segment at 472–488 (VGINAVLSAVILPSEVA) threads the bilayer. Topologically, residues 489-572 (FKNAYGYNYY…VYKKPERHKA (84 aa)) are mitochondrial intermembrane.

The protein belongs to the chaperonin (HSP60) family. In terms of assembly, forms a high molecular mass protein complex of approximately 850 kDa.

The protein resides in the mitochondrion inner membrane. Its function is as follows. Chaperone. Required for the assembly of succinate dehydrogenase subunits. Ensures mitochondrial gene expression at elevated temperatures and prevents heat-aggregation of the ribosomal subunit VAR1. The polypeptide is Mitochondrial chaperone TCM62 (TCM62) (Saccharomyces cerevisiae (strain YJM789) (Baker's yeast)).